Reading from the N-terminus, the 160-residue chain is MGDVVADALEKLSADQIEQFRKYFNMFDKEGKGYIRATQVGQILRTMGQAFEERDLKQLIKEFDADGSGEIEFEEFAAMVANFVVNNENDEGLEEELREAFRLYDKEGNGYINVSDLRDILRALDDNVSEEELDEMIAEIDADGSGTVDFDEFMEMMSGE.

4 EF-hand domains span residues 15-50, 51-86, 92-127, and 128-160; these read DQIEQFRKYFNMFDKEGKGYIRATQVGQILRTMGQA, FEERDLKQLIKEFDADGSGEIEFEEFAAMVANFVVN, GLEEELREAFRLYDKEGNGYINVSDLRDILRALDDN, and VSEEELDEMIAEIDADGSGTVDFDEFMEMMSGE. Ca(2+) contacts are provided by Asp64, Asp66, Ser68, Glu70, and Glu75. Ca(2+) is bound by residues Asp141, Asp143, Ser145, Thr147, and Glu152.

This sequence belongs to the troponin C family. As to expression, pharyngeal muscle.

This is Troponin C, isoform 2 (tnc-2) from Caenorhabditis elegans.